The sequence spans 399 residues: DNA replication and repair protein RecF (399 aa).

30–37 serves as a coordination point for ATP; that stretch reads GSNGIGKT.

The protein belongs to the RecF family.

It is found in the cytoplasm. In terms of biological role, the RecF protein is involved in DNA metabolism; it is required for DNA replication and normal SOS inducibility. RecF binds preferentially to single-stranded, linear DNA. It also seems to bind ATP. This Paenarthrobacter aurescens (strain TC1) protein is DNA replication and repair protein RecF.